A 260-amino-acid polypeptide reads, in one-letter code: Purine nucleoside phosphorylase XF_0940 (260 aa).

Zn(2+)-binding residues include histidine 79, cysteine 120, and histidine 137.

Belongs to the purine nucleoside phosphorylase YfiH/LACC1 family. Homodimer. Requires Cu(2+) as cofactor. The cofactor is Zn(2+).

It catalyses the reaction adenosine + phosphate = alpha-D-ribose 1-phosphate + adenine. The enzyme catalyses S-methyl-5'-thioadenosine + phosphate = 5-(methylsulfanyl)-alpha-D-ribose 1-phosphate + adenine. It carries out the reaction inosine + phosphate = alpha-D-ribose 1-phosphate + hypoxanthine. The catalysed reaction is adenosine + H2O + H(+) = inosine + NH4(+). Purine nucleoside enzyme that catalyzes the phosphorolysis of adenosine and inosine nucleosides, yielding D-ribose 1-phosphate and the respective free bases, adenine and hypoxanthine. Also catalyzes the phosphorolysis of S-methyl-5'-thioadenosine into adenine and S-methyl-5-thio-alpha-D-ribose 1-phosphate. Also has adenosine deaminase activity. This chain is Purine nucleoside phosphorylase XF_0940, found in Xylella fastidiosa (strain 9a5c).